Reading from the N-terminus, the 27-residue chain is Endoglucanase gh5 (27 aa).

Glu6 serves as the catalytic Nucleophile.

The enzyme catalyses Endohydrolysis of (1-&gt;4)-beta-D-glucosidic linkages in cellulose, lichenin and cereal beta-D-glucans.. Activity is stimulated by zinc ions, potassium ions and DTT. Activity is inhibited by manganese and chloride ions. Its function is as follows. Endoglucanase (EG) that cleaves the internal beta-1,4-glucosidic bonds in cellulose. This Fomes meliae (Fomitopsis meliae) protein is Endoglucanase gh5.